Here is a 95-residue protein sequence, read N- to C-terminus: Large ribosomal subunit protein bL31 (95 aa).

Residues 68-95 (AGLNNINKKPEKKKIQGKSEPRKSLNEL) are disordered. Residues 80-95 (KKIQGKSEPRKSLNEL) are compositionally biased toward basic and acidic residues.

This sequence belongs to the bacterial ribosomal protein bL31 family. Type A subfamily. Part of the 50S ribosomal subunit.

Binds the 23S rRNA. The polypeptide is Large ribosomal subunit protein bL31 (Ureaplasma parvum serovar 3 (strain ATCC 700970)).